Consider the following 388-residue polypeptide: Putrescine N-methyltransferase 1 (388 aa).

Composition is skewed to polar residues over residues 1–14 (MEVISTNTNGSTIF), 23–39 (GYQNGTSKHQNGHQNGT), and 46–88 (HQNG…GNEL). The interval 1-88 (MEVISTNTNG…TISHDNGNEL (88 aa)) is disordered. A PABS domain is found at 99–336 (PGWFSEFSAL…GVIGYMLCST (238 aa)). S-adenosyl-L-methionine contacts are provided by residues glutamine 130, glutamate 205, and 236–237 (DG). The active-site Proton acceptor is aspartate 255. Tyrosine 324 lines the S-adenosyl-L-methionine pocket.

It belongs to the class I-like SAM-binding methyltransferase superfamily. Spermidine/spermine synthase family. In terms of tissue distribution, mainly expressed in roots.

It catalyses the reaction putrescine + S-adenosyl-L-methionine = N-methylputrescine + S-adenosyl-L-homocysteine + H(+). Its pathway is alkaloid biosynthesis; nicotine biosynthesis. Its function is as follows. Involved in the biosynthesis of pyridine alkaloid natural products, leading mainly to the production of anabasine, anatabine, nicotine and nornicotine, effective deterrents against herbivores with antiparasitic and pesticide properties (neurotoxins); nornicotine serves as the precursor in the synthesis of the carcinogen compound N'-nitrosonornicotine (NNN). Methyltransferase that mediates the conversion of putrescine to N-methylputrescine. The sequence is that of Putrescine N-methyltransferase 1 from Nicotiana attenuata (Coyote tobacco).